The primary structure comprises 320 residues: MADNEFDIDAFFASHGEVSSPENQHCGFIAIVGRPNVGKSTLLNKILGQKISITSRKPQTTRHRIMGVDTDGDYQAIYVDTPGLHIEEKRAINRLMNRAANSSLSDVNLVFFLVDGTHWTKDDEMVLTKLQKSNFPVVLCVNKVDNVQDRNEVMLHMAEMSKKMDFVDVVPISAKQGKNIDVLRKHVRNHLPKATHHFPEEYVTDRSQRFMASEIVREKLMRFTGDELPYSVTVEIERFDYNPETDGFHINALILVERNGQKKMVIGKGGEKIKTIGREARLDMEELFGRKVYLETWVKVKSGWADDERALRSLGYIDDL.

An Era-type G domain is found at 25–193 (HCGFIAIVGR…RKHVRNHLPK (169 aa)). Positions 33–40 (GRPNVGKS) are G1. Position 33–40 (33–40 (GRPNVGKS)) interacts with GTP. Residues 59-63 (QTTRH) are G2. Positions 80–83 (DTPG) are G3. GTP contacts are provided by residues 80-84 (DTPGL) and 142-145 (NKVD). The segment at 142-145 (NKVD) is G4. The segment at 172 to 174 (ISA) is G5. In terms of domain architecture, KH type-2 spans 216–302 (VREKLMRFTG…YLETWVKVKS (87 aa)).

The protein belongs to the TRAFAC class TrmE-Era-EngA-EngB-Septin-like GTPase superfamily. Era GTPase family. As to quaternary structure, monomer.

Its subcellular location is the cytoplasm. The protein resides in the cell inner membrane. Its function is as follows. An essential GTPase that binds both GDP and GTP, with rapid nucleotide exchange. Plays a role in 16S rRNA processing and 30S ribosomal subunit biogenesis and possibly also in cell cycle regulation and energy metabolism. The sequence is that of GTPase Era from Vibrio parahaemolyticus serotype O3:K6 (strain RIMD 2210633).